The sequence spans 87 residues: Phosphocarrier protein HPr (87 aa).

One can recognise an HPr domain in the interval Met-1–Glu-87. The active-site Pros-phosphohistidine intermediate is the His-15. Ser-46 carries the phosphoserine; by HPrK/P modification.

It belongs to the HPr family.

The protein localises to the cytoplasm. With respect to regulation, phosphorylation on Ser-46 inhibits the phosphoryl transfer from enzyme I to HPr. Its function is as follows. General (non sugar-specific) component of the phosphoenolpyruvate-dependent sugar phosphotransferase system (sugar PTS). This major carbohydrate active-transport system catalyzes the phosphorylation of incoming sugar substrates concomitantly with their translocation across the cell membrane. The phosphoryl group from phosphoenolpyruvate (PEP) is transferred to the phosphoryl carrier protein HPr by enzyme I. Phospho-HPr then transfers it to the PTS EIIA domain. In terms of biological role, P-Ser-HPr interacts with the catabolite control protein A (CcpA), forming a complex that binds to DNA at the catabolite response elements cre, operator sites preceding a large number of catabolite-regulated genes. Thus, P-Ser-HPr is a corepressor in carbon catabolite repression (CCR), a mechanism that allows bacteria to coordinate and optimize the utilization of available carbon sources. P-Ser-HPr also plays a role in inducer exclusion, in which it probably interacts with several non-PTS permeases and inhibits their transport activity. The polypeptide is Phosphocarrier protein HPr (ptsH) (Halalkalibacterium halodurans (strain ATCC BAA-125 / DSM 18197 / FERM 7344 / JCM 9153 / C-125) (Bacillus halodurans)).